Here is an 84-residue protein sequence, read N- to C-terminus: LYR motif-containing protein 5B (84 aa).

This sequence belongs to the complex I LYR family.

This is LYR motif-containing protein 5B (lyrm5b) from Danio rerio (Zebrafish).